The sequence spans 199 residues: Glycerol-3-phosphate acyltransferase (199 aa).

Transmembrane regions (helical) follow at residues 4 to 24, 51 to 71, 77 to 97, 111 to 131, and 152 to 172; these read LVSVAILGYLLGSIPVGFLMG, WAALFTVLCDIGKGLLAAYLG, EWGFVAAGLLASLGHSYPVWL, VMLLHYPLAVLVGIAAGALAV, and LFLLDAPLSHRLLVVALAVVI.

It belongs to the PlsY family. Probably interacts with PlsX.

The protein localises to the cell membrane. The enzyme catalyses an acyl phosphate + sn-glycerol 3-phosphate = a 1-acyl-sn-glycero-3-phosphate + phosphate. Its pathway is lipid metabolism; phospholipid metabolism. Catalyzes the transfer of an acyl group from acyl-phosphate (acyl-PO(4)) to glycerol-3-phosphate (G3P) to form lysophosphatidic acid (LPA). This enzyme utilizes acyl-phosphate as fatty acyl donor, but not acyl-CoA or acyl-ACP. This is Glycerol-3-phosphate acyltransferase from Symbiobacterium thermophilum (strain DSM 24528 / JCM 14929 / IAM 14863 / T).